Reading from the N-terminus, the 448-residue chain is Alpha-2B adrenergic receptor (448 aa).

The Extracellular portion of the chain corresponds to 1–12; the sequence is MDHQEPYSVQAT. The helical transmembrane segment at 13 to 38 threads the bilayer; the sequence is AAIAAVITFLILFTIFGNALVILAVL. Over 39-49 the chain is Cytoplasmic; that stretch reads TSRSLPAPQNL. A helical transmembrane segment spans residues 50–75; the sequence is FLVSLAAADILVATLIIPFSLANELL. The Extracellular segment spans residues 76-85; the sequence is GYWYFWRTWC. A disulfide bridge connects residues C85 and C163. A helical transmembrane segment spans residues 86–108; that stretch reads EVYLALDVLFCTSSIVHLCAISL. The Cytoplasmic portion of the chain corresponds to 109 to 130; sequence DRYWAVSRALEYNSKRTPRRIK. Residues 131 to 153 form a helical membrane-spanning segment; it reads CIILTVWLIAAVISLPPLIYKGD. Over 154–168 the chain is Extracellular; that stretch reads QGPSPRGPQCKINQE. The helical transmembrane segment at 169–192 threads the bilayer; sequence AWYILASSIGSFFAPCLIMILVYL. Residues 193–370 lie on the Cytoplasmic side of the membrane; that stretch reads RIYLIAKRSH…MTREKRFTFV (178 aa). The segment at 203–326 is disordered; sequence RRGPRAKGGP…PASMCSPSLQ (124 aa). A compositionally biased stretch (acidic residues) spans 293-309; the sequence is AEEEAEEEEEEEGDECE. Residues 371-394 traverse the membrane as a helical segment; it reads LAVVIGVFVLCWFPFFFTYSLGAI. Over 395–403 the chain is Extracellular; it reads CPQHCKVPH. Residues 404–427 form a helical membrane-spanning segment; that stretch reads GLFQFFFWIGYCNSSLNPVIYTIF. Topologically, residues 428 to 448 are cytoplasmic; the sequence is NQDFRRAFRRILCRQWTQTAW. C440 is lipidated: S-palmitoyl cysteine.

It belongs to the G-protein coupled receptor 1 family. Adrenergic receptor subfamily. ADRA2B sub-subfamily. In terms of assembly, interacts with RAB26. Interacts with PPP1R9B.

Its subcellular location is the cell membrane. In terms of biological role, alpha-2 adrenergic receptors mediate the catecholamine-induced inhibition of adenylate cyclase through the action of G proteins. The polypeptide is Alpha-2B adrenergic receptor (ADRA2B) (Cavia porcellus (Guinea pig)).